Reading from the N-terminus, the 142-residue chain is Trafficking protein particle complex subunit 1 (142 aa).

It belongs to the TRAPP small subunits family. BET5 subfamily. Part of the multisubunit TRAPP (transport protein particle) complex.

Its subcellular location is the golgi apparatus. The protein localises to the cis-Golgi network. The protein resides in the endoplasmic reticulum. In terms of biological role, may play a role in vesicular transport from endoplasmic reticulum to Golgi. The chain is Trafficking protein particle complex subunit 1 (trappc1-1) from Dictyostelium discoideum (Social amoeba).